We begin with the raw amino-acid sequence, 114 residues long: Transmembrane protein 14B (114 aa).

A run of 4 helical transmembrane segments spans residues 8–28, 34–54, 60–80, and 83–103; these read LVPLHWFGFGYTALVVSGGIV, GSVPSLAAGLLFGSLAGLGAY, PRNVWGFLAATSVTFVGVMGM, and YYYGKFMPVGLIAGASLLMAA.

Belongs to the TMEM14 family. Interacts with IQGAP1; this interaction promotes phosphorylation and nuclear translocation of IQGAP1. Mainly expressed in the outer subventricular zone (OSVZ) of the fetal brains.

It localises to the membrane. In terms of biological role, primate-specific protein involved in cortical expansion and folding in the developing neocortex. May drive neural progenitor proliferation through nuclear translocation of IQGAP1, which in turn promotes G1/S cell cycle transitions. The polypeptide is Transmembrane protein 14B (TMEM14B) (Homo sapiens (Human)).